The primary structure comprises 169 residues: UPF0303 protein BCAN_A1444 (169 aa).

This sequence belongs to the UPF0303 family.

This chain is UPF0303 protein BCAN_A1444, found in Brucella canis (strain ATCC 23365 / NCTC 10854 / RM-666).